The chain runs to 215 residues: Peptide methionine sulfoxide reductase MsrA (215 aa).

C58 is an active-site residue.

It belongs to the MsrA Met sulfoxide reductase family.

It catalyses the reaction L-methionyl-[protein] + [thioredoxin]-disulfide + H2O = L-methionyl-(S)-S-oxide-[protein] + [thioredoxin]-dithiol. The catalysed reaction is [thioredoxin]-disulfide + L-methionine + H2O = L-methionine (S)-S-oxide + [thioredoxin]-dithiol. Has an important function as a repair enzyme for proteins that have been inactivated by oxidation. Catalyzes the reversible oxidation-reduction of methionine sulfoxide in proteins to methionine. The chain is Peptide methionine sulfoxide reductase MsrA from Pseudomonas savastanoi pv. phaseolicola (strain 1448A / Race 6) (Pseudomonas syringae pv. phaseolicola (strain 1448A / Race 6)).